We begin with the raw amino-acid sequence, 241 residues long: MIIHVEENYEAMSKKAALIVASQVVSNPAGVLGLATGSTPAGMYKELVDLFKEGIIDFSQITTFNLDEYYGLPKTNESSYYTYMMENLFNHINVPLERVHIPNGMAEDVEKECLAYEEKIRNAGGIDLQILGIGANGHIGFNEPDHKLSMKTHLVELTEKTIQDNSRFFQKEEDVPTKALSMGIGTILGAKKIILMANGKNKAEAIKEMTNGYLNPMVPASMIQAHPDVILIIDKEAASLL.

Asp67 serves as the catalytic Proton acceptor; for enolization step. The active-site For ring-opening step is the Asn136. His138 (proton acceptor; for ring-opening step) is an active-site residue. Glu143 acts as the For ring-opening step in catalysis.

The protein belongs to the glucosamine/galactosamine-6-phosphate isomerase family. NagB subfamily.

The catalysed reaction is alpha-D-glucosamine 6-phosphate + H2O = beta-D-fructose 6-phosphate + NH4(+). The protein operates within amino-sugar metabolism; N-acetylneuraminate degradation; D-fructose 6-phosphate from N-acetylneuraminate: step 5/5. Its function is as follows. Catalyzes the reversible isomerization-deamination of glucosamine 6-phosphate (GlcN6P) to form fructose 6-phosphate (Fru6P) and ammonium ion. In Alkaliphilus oremlandii (strain OhILAs) (Clostridium oremlandii (strain OhILAs)), this protein is Glucosamine-6-phosphate deaminase.